The primary structure comprises 360 residues: MAAERGAGQQQSQEMMEVDRRVESEESGDEEGKKQNSGMVADLSAHSLKDGEERGDEDPEEGQELPVDMETISLDRDAEDVDLNHYRIGKIEGFEVLKKVKTLCLRQNLIKCIENLEGLQSLRELDLYDNQIRRIENLDALTELEVLDISFNLLRNIEGIDKLTRLKKLFLVNNKINKIENISSLHQLQMLELGSNRIRAIENIDTLTNLESLFLGKNKITKLQNLDALTNLTVLSMQSNRLTKIEGLQSLVNLRELYLSHNGIEVIEGLDNNNKLTMLDIASNRIKKIENVSHLTELQEFWMNDNLLDCWSDLDELKGARSLETVYLERNPLQRDPQYRRKIMLALPSVRQIDATFVRF.

Positions 1–65 (MAAERGAGQQ…DEDPEEGQEL (65 aa)) are disordered. A2 is subject to N-acetylalanine. A phosphoserine mark is found at S12, S24, S27, S44, and S47. Residues 17-34 (EVDRRVESEESGDEEGKK) show a composition bias toward basic and acidic residues. The segment covering 53 to 63 (ERGDEDPEEGQ) has biased composition (acidic residues). LRR repeat units follow at residues 77–98 (DAED…EVLK), 99–120 (KVKT…EGLQ), 121–142 (SLRE…DALT), 143–164 (ELEV…DKLT), 165–186 (RLKK…SSLH), 187–208 (QLQM…DTLT), 209–230 (NLES…DALT), 231–252 (NLTV…QSLV), 253–274 (NLRE…DNNN), 275–296 (KLTM…SHLT), and 297–318 (ELQE…DELK). S322 is modified (phosphoserine). Positions 331–360 (NPLQRDPQYRRKIMLALPSVRQIDATFVRF) constitute an LRRCT domain.

It belongs to the SDS22 family. In terms of assembly, interacts with PPP1CA, PPP1CB and PPP1CC/PPP1G. Interacts with PPP1CC isoform 2 in motile caudal epididymal spermatozoa. In terms of tissue distribution, expressed in epididymal spermatozoa including the principal piece of the flagellum and the head-neck junction.

The protein localises to the nucleus. Regulatory subunit of protein phosphatase 1. Inactivates the PPP1CC isoform 2 during epididymal sperm maturation. The sequence is that of Protein phosphatase 1 regulatory subunit 7 (PPP1R7) from Bos taurus (Bovine).